The following is a 304-amino-acid chain: Retrotransposon Gag-like protein 4 (304 aa).

The segment at 276 to 293 (QLCVYCNQAGHFTRDCLA) adopts a CCHC-type zinc-finger fold.

In adults, expressed in brain, eye, kidney, ovary and testis. Weakly expressed in thymus, heart and muscle.

Involved in cognitive function in the brain, possibly via the noradrenergic system. This chain is Retrotransposon Gag-like protein 4, found in Mus musculus (Mouse).